Here is a 431-residue protein sequence, read N- to C-terminus: MPKLTRSAELFEKAKKFIPGGVNSPVRAFKSVGGNPIFMAKGQGAYMTDVDGNTYLDYVGSWGPFILGSMHPRITAALERTLTTIGTSFGTPIEMEIEIAELLVEIVPSIEMVRMVNSGTEATMSAVRLARGCTGRDKIIKFEGCYHGHGDSFLIKAGSGALTLGAPDSPGVTKGTAEDTLNAKYNDIASVELLVAENKGNIAAIIIEPVAGNTGVIPAKKEFLQALRDLCDREGIVLIFDEVMCGFRVALGGAQELYGITPDLTTMGKIIGGGLPVGAFGGKRSLMENVAPLGGVYQAGTLSGNPLALTAGIETLKILKDENPYPELERKAAFLEAGFRDNMQKLGLNFVQNRVGSMACLFFTETPVESYDSAITCDTEMFGRYFTSMLDQGIYLAPSQFEAMFTSAVHSNADLEKTVKANYIALQAAAK.

An N6-(pyridoxal phosphate)lysine modification is found at Lys-269.

The protein belongs to the class-III pyridoxal-phosphate-dependent aminotransferase family. HemL subfamily. As to quaternary structure, homodimer. It depends on pyridoxal 5'-phosphate as a cofactor.

The protein localises to the cytoplasm. The enzyme catalyses (S)-4-amino-5-oxopentanoate = 5-aminolevulinate. It functions in the pathway porphyrin-containing compound metabolism; protoporphyrin-IX biosynthesis; 5-aminolevulinate from L-glutamyl-tRNA(Glu): step 2/2. The protein operates within porphyrin-containing compound metabolism; chlorophyll biosynthesis. In Chlorobium phaeovibrioides (strain DSM 265 / 1930) (Prosthecochloris vibrioformis (strain DSM 265)), this protein is Glutamate-1-semialdehyde 2,1-aminomutase.